A 79-amino-acid polypeptide reads, in one-letter code: ATP synthase subunit c (79 aa).

2 helical membrane passes run 11–31 (MAAA…IGIL) and 53–73 (FFIV…LGLY).

This sequence belongs to the ATPase C chain family. F-type ATPases have 2 components, F(1) - the catalytic core - and F(0) - the membrane proton channel. F(1) has five subunits: alpha(3), beta(3), gamma(1), delta(1), epsilon(1). F(0) has three main subunits: a(1), b(2) and c(10-14). The alpha and beta chains form an alternating ring which encloses part of the gamma chain. F(1) is attached to F(0) by a central stalk formed by the gamma and epsilon chains, while a peripheral stalk is formed by the delta and b chains.

The protein localises to the cell inner membrane. Functionally, f(1)F(0) ATP synthase produces ATP from ADP in the presence of a proton or sodium gradient. F-type ATPases consist of two structural domains, F(1) containing the extramembraneous catalytic core and F(0) containing the membrane proton channel, linked together by a central stalk and a peripheral stalk. During catalysis, ATP synthesis in the catalytic domain of F(1) is coupled via a rotary mechanism of the central stalk subunits to proton translocation. In terms of biological role, key component of the F(0) channel; it plays a direct role in translocation across the membrane. A homomeric c-ring of between 10-14 subunits forms the central stalk rotor element with the F(1) delta and epsilon subunits. The sequence is that of ATP synthase subunit c from Pectobacterium atrosepticum (strain SCRI 1043 / ATCC BAA-672) (Erwinia carotovora subsp. atroseptica).